A 232-amino-acid chain; its full sequence is Flagellar L-ring protein (232 aa).

The first 21 residues, 1 to 21 (MQKNAAHTYAISSLLVLSLTG), serve as a signal peptide directing secretion. A lipid anchor (N-palmitoyl cysteine) is attached at C22. Residue C22 is the site of S-diacylglycerol cysteine attachment.

This sequence belongs to the FlgH family. The basal body constitutes a major portion of the flagellar organelle and consists of four rings (L,P,S, and M) mounted on a central rod.

The protein localises to the cell outer membrane. It localises to the bacterial flagellum basal body. In terms of biological role, assembles around the rod to form the L-ring and probably protects the motor/basal body from shearing forces during rotation. The sequence is that of Flagellar L-ring protein from Shigella dysenteriae serotype 1 (strain Sd197).